A 291-amino-acid chain; its full sequence is Protein pxr1 (291 aa).

Residues 1 to 11 (MGLAAPRKRTK) are compositionally biased toward basic residues. Disordered stretches follow at residues 1–26 (MGLAAPRKRTKISHDPNNTTWSRSTD) and 146–268 (LVPP…FRGR). 2 stretches are compositionally biased toward polar residues: residues 15–25 (DPNNTTWSRST) and 146–156 (LVPPTSQNGQA). The G-patch domain maps to 25–79 (TDGFGHRILKAQGWTPGSFLGPRNAAHSDLFTTASASHIRVVLKDDNLGLGARPK). Residues 194–205 (ETNSRGSREKER) show a composition bias toward basic and acidic residues. Residues 206–219 (KREKRQMRRDKKRK) are compositionally biased toward basic residues. A compositionally biased stretch (basic and acidic residues) spans 230 to 247 (MQEKTRVQGPSEDVKPTE).

The protein belongs to the PINX1 family.

The protein resides in the nucleus. The protein localises to the nucleolus. Involved in rRNA-processing at A0, A1 and A2 sites and negatively regulates telomerase. The polypeptide is Protein pxr1 (pxr1) (Aspergillus clavatus (strain ATCC 1007 / CBS 513.65 / DSM 816 / NCTC 3887 / NRRL 1 / QM 1276 / 107)).